We begin with the raw amino-acid sequence, 717 residues long: Delta-like protein D (717 aa).

The first 19 residues, 1 to 19 (MGRLMIAVLLCVMISQGFC), serve as a signal peptide directing secretion. At 20–547 (SGVFELKLQE…EEDDGGFPWT (528 aa)) the chain is on the extracellular side. Residues 175–219 (FVCDEHYYGEGCSVFCRPRDDTFGHFTCGERGEIICNSGWKGQYC) form the DSL domain. Disulfide bonds link C177/C186, C190/C202, C210/C219, C224/C235, C228/C241, C243/C252, C261/C266, C274/C283, C290/C302, C296/C312, C314/C323, C330/C341, C335/C350, C352/C361, C368/C379, C373/C389, C391/C400, C407/C418, C412/C427, C429/C438, C445/C456, C450/C465, C467/C476, C483/C494, C488/C503, and C505/C514. 3 consecutive EGF-like domains span residues 220–253 (TEPICLPGCDEDHGFCDKPGECKCRVGFSGKYCD), 257–284 (RYPGCLHGTCQQPWQCNCQEGWGGLFCN), and 286–324 (DLNYCTHHKPCQNGATCTNTGQGSYTCSCRPGFTGDSCE). The region spanning 326-362 (EVNECSGSPCRNGGSCTDLENTYSCTCPPGFYGRNCE) is the EGF-like 4; calcium-binding domain. EGF-like domains follow at residues 364–401 (SAMTCADGPCFNGGHCADNPEGGYFCQCPMGYAGFNCE) and 403–439 (KIDHCSSNPCSNDAQCLDLVDSYLCQCPEGFTGTHCE). One can recognise an EGF-like 7; calcium-binding domain in the interval 441–477 (NIDECATYPCQNGGTCQDGLSDYTCTCPPGYTGKNCT). An N-linked (GlcNAc...) asparagine glycan is attached at N475. In terms of domain architecture, EGF-like 8 spans 479-515 (AVNKCLHNPCHNGATCHEMDNRYVCACIPGYGGRNCQ). A helical membrane pass occupies residues 548-568 (AVCAGIILVLLVLIGGSVFVI). Over 569–717 (YIRLKLQQRS…KDECIIATEV (149 aa)) the chain is Cytoplasmic. Residues 649 to 693 (EDLGKEDSERSEATKCEPLDSDSEEKHRNHLKSDSSERKRTESLC) form a disordered region.

Interacts with mib. Ubiquitinated by mib, leading to its endocytosis and subsequent degradation. In terms of tissue distribution, expressed in both mesodermal and neuroectodermal regions. In the developing nervous system, it is expressed in overlapping regions with deltaB (dlb) and deltaA (dla); in the neural plate, dld is expressed in patches of contiguous cells with dla, while dlb is confined to scattered cells within those patches that will differentiate as neurons. In somites, it marks the anterior part of each formed somite, while deltaC (dlc) marks the posterior part. In 24 hours embryos, expressed in the hindbrain in stripes adjacent to rhombomere boundaries, but not in the actual boundary cells.

Its subcellular location is the membrane. Its function is as follows. Acts as a ligand for Notch receptors and is involved in primary neurogenesis and somitogenesis. Can activate Notch receptors, thereby playing a key role in lateral inhibition, a process that prevents the immediate neighbors of each nascent neural cell from simultaneously embarking on neural differentiation. Required in somite segmentation to keep the oscillations of neighboring presomitic mesoderm cells synchronized. This chain is Delta-like protein D (dld), found in Danio rerio (Zebrafish).